The following is a 343-amino-acid chain: E3 ubiquitin-protein ligase SP1 (343 aa).

The helical transmembrane segment at Met-1–Arg-21 threads the bilayer. At Ser-22–Arg-222 the chain is on the chloroplast intermembrane side. The helical transmembrane segment at Leu-223 to Ile-244 threads the bilayer. The Cytoplasmic portion of the chain corresponds to Asp-245 to His-343. An RING-type zinc finger spans residues Cys-296–Arg-331.

Interacts with TOC33, TOC75-3 and TOC159. Post-translationally, auto-ubiquitinated.

The protein resides in the plastid. Its subcellular location is the chloroplast outer membrane. It catalyses the reaction S-ubiquitinyl-[E2 ubiquitin-conjugating enzyme]-L-cysteine + [acceptor protein]-L-lysine = [E2 ubiquitin-conjugating enzyme]-L-cysteine + N(6)-ubiquitinyl-[acceptor protein]-L-lysine.. It functions in the pathway protein modification; protein ubiquitination. E3 ubiquitin-protein ligase involved in the regulation of protein import in the chloroplast. Associates with TOC complexes and mediates ubiquitination of TOC components, promoting their degradation via the ubiquitin-proteasome system (UPS). Plays a role in the reorganization of the TOC machinery. Involved in a mechanism that regulates plastid biogenesis via UPS. Promotes stress tolerance by depleting the chloroplast protein import apparatus, which limits photosystem assembly and the potential for reactive oxygen species (ROS) formation. May act as negative regulator of programmed cell death (PCD) during biotic stress. The protein is E3 ubiquitin-protein ligase SP1 of Arabidopsis thaliana (Mouse-ear cress).